Reading from the N-terminus, the 471-residue chain is Serine hydroxymethyltransferase, cytosolic (471 aa).

An N6-(pyridoxal phosphate)lysine modification is found at Lys249.

Belongs to the SHMT family. Pyridoxal 5'-phosphate serves as cofactor.

It localises to the cytoplasm. It is found in the cytosol. It catalyses the reaction (6R)-5,10-methylene-5,6,7,8-tetrahydrofolate + glycine + H2O = (6S)-5,6,7,8-tetrahydrofolate + L-serine. The protein operates within one-carbon metabolism; tetrahydrofolate interconversion. In terms of biological role, catalyzes the interconversion of serine and glycine. Essential for viability and required for virulence in a murine model of established pulmonary infection. In Aspergillus fumigatus (strain ATCC MYA-4609 / CBS 101355 / FGSC A1100 / Af293) (Neosartorya fumigata), this protein is Serine hydroxymethyltransferase, cytosolic.